We begin with the raw amino-acid sequence, 249 residues long: tRNA (guanine-N(1)-)-methyltransferase (249 aa).

Residues Gly-113 and 133 to 138 contribute to the S-adenosyl-L-methionine site; that span reads IGDFVL.

This sequence belongs to the RNA methyltransferase TrmD family. In terms of assembly, homodimer.

It localises to the cytoplasm. The catalysed reaction is guanosine(37) in tRNA + S-adenosyl-L-methionine = N(1)-methylguanosine(37) in tRNA + S-adenosyl-L-homocysteine + H(+). Functionally, specifically methylates guanosine-37 in various tRNAs. This is tRNA (guanine-N(1)-)-methyltransferase from Aliivibrio fischeri (strain ATCC 700601 / ES114) (Vibrio fischeri).